The primary structure comprises 347 residues: UPF0284 protein M1425_0030 (347 aa).

It belongs to the UPF0284 family.

This Saccharolobus islandicus (strain M.14.25 / Kamchatka #1) (Sulfolobus islandicus) protein is UPF0284 protein M1425_0030.